Here is a 247-residue protein sequence, read N- to C-terminus: Chromosome partition protein MukE (247 aa).

The disordered stretch occupies residues 213–247; it reads AQSLQEEKNGLKDNMDQSAVENEQYFENEENEGIA. The segment covering 217-227 has biased composition (basic and acidic residues); it reads QEEKNGLKDNM. Positions 236–247 are enriched in acidic residues; sequence QYFENEENEGIA.

This sequence belongs to the MukE family. As to quaternary structure, interacts, and probably forms a ternary complex, with MukF and MukB. The complex formation is stimulated by calcium or magnesium.

Its subcellular location is the cytoplasm. The protein resides in the nucleoid. In terms of biological role, involved in chromosome condensation, segregation and cell cycle progression. May participate in facilitating chromosome segregation by condensation DNA from both sides of a centrally located replisome during cell division. Probably acts via its interaction with MukB and MukF. This chain is Chromosome partition protein MukE, found in Histophilus somni (strain 2336) (Haemophilus somnus).